Here is a 160-residue protein sequence, read N- to C-terminus: Putative 4-hydroxy-4-methyl-2-oxoglutarate aldolase (160 aa).

Substrate contacts are provided by residues 78-81 (GDVI) and Arg-100. Residue Asp-101 coordinates a divalent metal cation.

Belongs to the class II aldolase/RraA-like family. Homotrimer. The cofactor is a divalent metal cation.

The catalysed reaction is 4-hydroxy-4-methyl-2-oxoglutarate = 2 pyruvate. It carries out the reaction oxaloacetate + H(+) = pyruvate + CO2. Its function is as follows. Catalyzes the aldol cleavage of 4-hydroxy-4-methyl-2-oxoglutarate (HMG) into 2 molecules of pyruvate. Also contains a secondary oxaloacetate (OAA) decarboxylase activity due to the common pyruvate enolate transition state formed following C-C bond cleavage in the retro-aldol and decarboxylation reactions. In Mycolicibacterium vanbaalenii (strain DSM 7251 / JCM 13017 / BCRC 16820 / KCTC 9966 / NRRL B-24157 / PYR-1) (Mycobacterium vanbaalenii), this protein is Putative 4-hydroxy-4-methyl-2-oxoglutarate aldolase.